The sequence spans 600 residues: Threonine dehydratase, mitochondrial (600 aa).

Lysine 144 carries the post-translational modification N6-(pyridoxal phosphate)lysine. ACT-like domains are found at residues valine 425–aspartate 497 and arginine 519–asparagine 590.

Belongs to the serine/threonine dehydratase family. As to quaternary structure, homotetramer. Requires pyridoxal 5'-phosphate as cofactor.

The protein localises to the mitochondrion. Its subcellular location is the cytoplasm. It carries out the reaction L-threonine = 2-oxobutanoate + NH4(+). It functions in the pathway amino-acid biosynthesis; L-isoleucine biosynthesis; 2-oxobutanoate from L-threonine: step 1/1. With respect to regulation, isoleucine allosterically inhibits while valine allosterically activates this enzyme. The protein is Threonine dehydratase, mitochondrial of Schizosaccharomyces pombe (strain 972 / ATCC 24843) (Fission yeast).